The sequence spans 293 residues: Elongation factor Ts (293 aa).

The tract at residues 80–83 is involved in Mg(2+) ion dislocation from EF-Tu; the sequence is TDFV.

This sequence belongs to the EF-Ts family.

Its subcellular location is the cytoplasm. Associates with the EF-Tu.GDP complex and induces the exchange of GDP to GTP. It remains bound to the aminoacyl-tRNA.EF-Tu.GTP complex up to the GTP hydrolysis stage on the ribosome. This chain is Elongation factor Ts, found in Staphylococcus aureus (strain USA300).